A 21-amino-acid chain; its full sequence is Pedibin (21 aa).

Residues 1-21 (AGEDVSHELEEKEKALANHSE) are disordered.

Functionally, morphogenetically active peptide. Active in foot development. This Hydra vulgaris (Hydra) protein is Pedibin.